Consider the following 217-residue polypeptide: Probable nicotinate-nucleotide adenylyltransferase (217 aa).

The protein belongs to the NadD family.

The enzyme catalyses nicotinate beta-D-ribonucleotide + ATP + H(+) = deamido-NAD(+) + diphosphate. Its pathway is cofactor biosynthesis; NAD(+) biosynthesis; deamido-NAD(+) from nicotinate D-ribonucleotide: step 1/1. In terms of biological role, catalyzes the reversible adenylation of nicotinate mononucleotide (NaMN) to nicotinic acid adenine dinucleotide (NaAD). The sequence is that of Probable nicotinate-nucleotide adenylyltransferase from Moorella thermoacetica (strain ATCC 39073 / JCM 9320).